A 361-amino-acid chain; its full sequence is Deoxyribonuclease-2-beta (361 aa).

A signal peptide spans 1–27 (MKQKMMARLLRTSFALLFLGLFGVLGA). N-linked (GlcNAc...) asparagine glycans are attached at residues N81, N103, N119, and N278.

The protein belongs to the DNase II family. In terms of tissue distribution, highly expressed in the eye lens and in salivary gland. Detected at lower levels in lung, prostate and lymph node. Isoform 2 is lung specific.

It localises to the lysosome. The catalysed reaction is Endonucleolytic cleavage to nucleoside 3'-phosphates and 3'-phosphooligonucleotide end-products.. Functionally, hydrolyzes DNA under acidic conditions. Does not require divalent cations for activity. Participates in the degradation of nuclear DNA during lens cell differentiation. This is Deoxyribonuclease-2-beta (DNASE2B) from Homo sapiens (Human).